A 290-amino-acid chain; its full sequence is F-box protein PP2-A13 (290 aa).

The F-box domain occupies 21-67 (RKLRLVDLPENCVALIMTRLDPPEICRLARLNRMFRRASSADFIWES).

As to quaternary structure, part of a SCF (ASK-cullin-F-box) protein ligase complex. Interacts with SKP1A/ASK1, SKP1B/ASK2, ASK5, ASK11 and ASK13.

The protein resides in the nucleus. It functions in the pathway protein modification; protein ubiquitination. Functionally, component of SCF(ASK-cullin-F-box) E3 ubiquitin ligase complexes, which may mediate the ubiquitination and subsequent proteasomal degradation of target proteins. This chain is F-box protein PP2-A13 (PP2A13), found in Arabidopsis thaliana (Mouse-ear cress).